Here is a 184-residue protein sequence, read N- to C-terminus: Cell number regulator 5 (184 aa).

The chain crosses the membrane as a helical span at residues 91-111 (MLWGLLTSLCCVFTGGLVLAV). A disordered region spans residues 162-184 (RTGSGSSPAPNVTPPPVQTMDEL).

This sequence belongs to the cornifelin family. In terms of tissue distribution, expressed in roots, leaves, stalks, immature ears, endosperm and pollen.

It is found in the membrane. This is Cell number regulator 5 (CNR5) from Zea mays (Maize).